We begin with the raw amino-acid sequence, 204 residues long: Large ribosomal subunit protein uL22c (204 aa).

Belongs to the universal ribosomal protein uL22 family. Part of the 50S ribosomal subunit.

It localises to the plastid. Its subcellular location is the chloroplast. Its function is as follows. This protein binds specifically to 23S rRNA. Functionally, the globular domain of the protein is located near the polypeptide exit tunnel on the outside of the subunit, while an extended beta-hairpin is found that lines the wall of the exit tunnel in the center of the 70S ribosome. This is Large ribosomal subunit protein uL22c (rpl22) from Pisum sativum (Garden pea).